Here is a 500-residue protein sequence, read N- to C-terminus: Nitrate/nitrite transporter NrtP (500 aa).

Helical transmembrane passes span 19-39, 52-72, 79-99, 109-129, 147-167, 175-195, 220-240, 247-267, 364-384, 389-409, 425-445, and 451-471; these read WFAFFLTFVCWFNFAPFATTI, TLGICNLALTIPARLIIGMLL, ITYSILLMFAVVPCLATALAQ, LLMGIVGSGFVVGIRMVAEWF, FGAFGAEFALPILAISTSFFS, LAIALVGIITAIYGVIYYNTV, SFWAMMISNFGLIFALGLLAW, IHFLTLSQMYLTWLVLAGLFA, WTMTIISVGIGVSYLMAHFIN, IPVAIAVTMFAAYFAQAGCGA, IAGNVGAYGNFGGVVYLTIFS, and TLFSTMGIAALICAFMCAFFL.

It belongs to the major facilitator superfamily. Nitrate/nitrite porter (TC 2.A.1.8) family.

The protein localises to the cell inner membrane. In terms of biological role, transport system for both nitrate and nitrite, with much higher affinity for nitrate than for nitrite. The sequence is that of Nitrate/nitrite transporter NrtP from Nostoc punctiforme (strain ATCC 29133 / PCC 73102).